The following is a 279-amino-acid chain: Urease accessory protein UreD (279 aa).

It belongs to the UreD family. As to quaternary structure, ureD, UreF and UreG form a complex that acts as a GTP-hydrolysis-dependent molecular chaperone, activating the urease apoprotein by helping to assemble the nickel containing metallocenter of UreC. The UreE protein probably delivers the nickel.

Its subcellular location is the cytoplasm. Functionally, required for maturation of urease via the functional incorporation of the urease nickel metallocenter. The protein is Urease accessory protein UreD of Streptococcus thermophilus (strain ATCC BAA-250 / LMG 18311).